Here is a 549-residue protein sequence, read N- to C-terminus: Biotin-dependent acetyl-/propionyl-coenzyme A carboxylase beta5 subunit (549 aa).

The region spanning 25–281 is the CoA carboxyltransferase N-terminal domain; it reads TAGKLAELHK…NNFTDAPRYS (257 aa). In terms of domain architecture, CoA carboxyltransferase C-terminal spans 295 to 542; the sequence is AKDLELDTLI…ERKIAHLPPK (248 aa).

It belongs to the AccD/PCCB family. As to quaternary structure, the biotin-dependent acyl-CoA carboxylase complex is composed of AccA3, which contains the biotin carboxylase (BC) and biotin carboxyl carrier protein (BCCP) domains, and AccD5, which contains the carboxyl transferase (CT) domain.

It carries out the reaction N(6)-carboxybiotinyl-L-lysyl-[protein] + acetyl-CoA = N(6)-biotinyl-L-lysyl-[protein] + malonyl-CoA. The enzyme catalyses N(6)-carboxybiotinyl-L-lysyl-[protein] + propanoyl-CoA = methylmalonyl-CoA + N(6)-biotinyl-L-lysyl-[protein]. It participates in lipid metabolism; mycolic acid biosynthesis. Its function is as follows. Component of a biotin-dependent acyl-CoA carboxylase complex. This subunit transfers the CO2 from carboxybiotin to the CoA ester substrate. When associated with the alpha3 subunit AccA3, is involved in the carboxylation of acetyl-CoA and propionyl-CoA. The protein is Biotin-dependent acetyl-/propionyl-coenzyme A carboxylase beta5 subunit (accD5) of Mycobacterium leprae (strain TN).